We begin with the raw amino-acid sequence, 272 residues long: ATP phosphoribosyltransferase regulatory subunit (272 aa).

It belongs to the class-II aminoacyl-tRNA synthetase family. HisZ subfamily. In terms of assembly, heteromultimer composed of HisG and HisZ subunits.

It localises to the cytoplasm. The protein operates within amino-acid biosynthesis; L-histidine biosynthesis; L-histidine from 5-phospho-alpha-D-ribose 1-diphosphate: step 1/9. Its function is as follows. Required for the first step of histidine biosynthesis. May allow the feedback regulation of ATP phosphoribosyltransferase activity by histidine. This chain is ATP phosphoribosyltransferase regulatory subunit, found in Staphylococcus aureus (strain bovine RF122 / ET3-1).